We begin with the raw amino-acid sequence, 179 residues long: ATP synthase subunit delta 2 (179 aa).

This sequence belongs to the ATPase delta chain family. As to quaternary structure, F-type ATPases have 2 components, F(1) - the catalytic core - and F(0) - the membrane proton channel. F(1) has five subunits: alpha(3), beta(3), gamma(1), delta(1), epsilon(1). F(0) has three main subunits: a(1), b(2) and c(10-14). The alpha and beta chains form an alternating ring which encloses part of the gamma chain. F(1) is attached to F(0) by a central stalk formed by the gamma and epsilon chains, while a peripheral stalk is formed by the delta and b chains.

The protein resides in the cell inner membrane. Functionally, f(1)F(0) ATP synthase produces ATP from ADP in the presence of a proton or sodium gradient. F-type ATPases consist of two structural domains, F(1) containing the extramembraneous catalytic core and F(0) containing the membrane proton channel, linked together by a central stalk and a peripheral stalk. During catalysis, ATP synthesis in the catalytic domain of F(1) is coupled via a rotary mechanism of the central stalk subunits to proton translocation. In terms of biological role, this protein is part of the stalk that links CF(0) to CF(1). It either transmits conformational changes from CF(0) to CF(1) or is implicated in proton conduction. The protein is ATP synthase subunit delta 2 of Syntrophotalea carbinolica (strain DSM 2380 / NBRC 103641 / GraBd1) (Pelobacter carbinolicus).